Consider the following 427-residue polypeptide: UDP-N-acetylglucosamine 1-carboxyvinyltransferase (427 aa).

Phosphoenolpyruvate is bound at residue 22–23; sequence KN. Arg-92 is a UDP-N-acetyl-alpha-D-glucosamine binding site. Asp-116 functions as the Proton donor in the catalytic mechanism. UDP-N-acetyl-alpha-D-glucosamine-binding residues include Asp-312 and Met-334.

The protein belongs to the EPSP synthase family. MurA subfamily.

It is found in the cytoplasm. The enzyme catalyses phosphoenolpyruvate + UDP-N-acetyl-alpha-D-glucosamine = UDP-N-acetyl-3-O-(1-carboxyvinyl)-alpha-D-glucosamine + phosphate. It functions in the pathway cell wall biogenesis; peptidoglycan biosynthesis. Its function is as follows. Cell wall formation. Adds enolpyruvyl to UDP-N-acetylglucosamine. In Borreliella burgdorferi (strain ATCC 35210 / DSM 4680 / CIP 102532 / B31) (Borrelia burgdorferi), this protein is UDP-N-acetylglucosamine 1-carboxyvinyltransferase.